We begin with the raw amino-acid sequence, 366 residues long: Adenine DNA glycosylase (366 aa).

Position 30–31 (30–31 (WR)) interacts with DNA. The active-site Proton donor/acceptor is the Glu-43. DNA contacts are provided by residues 48–49 (QT), 86–88 (LGY), Tyr-126, and Glu-188. The HhH domain maps to 105–133 (RYGGKVPDDPDEFSRLKGVGPYTVGAVLS). Positions 198, 205, 208, and 214 each coordinate [4Fe-4S] cluster. DNA is bound at residue Ser-308.

It belongs to the Nth/MutY family. Requires [4Fe-4S] cluster as cofactor.

The catalysed reaction is Hydrolyzes free adenine bases from 7,8-dihydro-8-oxoguanine:adenine mismatched double-stranded DNA, leaving an apurinic site.. Its function is as follows. Base excision repair (BER) glycosylase that initiates repair of A:oxoG to C:G by removing the inappropriately paired adenine base from the DNA backbone, generating an abasic site product. 8-oxoguanine (oxoG) is a genotoxic DNA lesion resulting from oxidation of guanine; this residue is misread by replicative DNA polymerases, that insert adenine instead of cytosine opposite the oxidized damaged base. Shows a powerful dicrimination of A versus C, since it does not cleave cytosine in oxoG:C pairs. May also be able to remove adenine from A:G mispairs, although this activity may not be physiologically relevant. This chain is Adenine DNA glycosylase, found in Geobacillus stearothermophilus (Bacillus stearothermophilus).